The sequence spans 389 residues: Very-long-chain 3-oxoacyl-CoA reductase (389 aa).

The helical transmembrane segment at 34–54 (IAVFLLAIGLFHVALKVVSYV) threads the bilayer. Positions 80, 134, 162, 239, 243, 272, and 274 each coordinate NADP(+). Tyrosine 239 functions as the Proton donor in the catalytic mechanism. The Lowers pKa of active site Tyr role is filled by lysine 243. The disordered stretch occupies residues 359–389 (QAAGGVADPKNTTAAREGYATESLKNETLKH).

It belongs to the short-chain dehydrogenases/reductases (SDR) family.

Its subcellular location is the endoplasmic reticulum membrane. The enzyme catalyses a very-long-chain (3R)-3-hydroxyacyl-CoA + NADP(+) = a very-long-chain 3-oxoacyl-CoA + NADPH + H(+). It functions in the pathway lipid metabolism; fatty acid biosynthesis. In terms of biological role, component of the microsomal membrane bound fatty acid elongation system, which produces the 26-carbon very long-chain fatty acids (VLCFA) from palmitate. Catalyzes the reduction of the 3-ketoacyl-CoA intermediate that is formed in each cycle of fatty acid elongation. VLCFAs serve as precursors for ceramide and sphingolipids. The protein is Very-long-chain 3-oxoacyl-CoA reductase of Yarrowia lipolytica (strain CLIB 122 / E 150) (Yeast).